The chain runs to 373 residues: Chaperone protein DnaJ (373 aa).

Residues aspartate 5–glycine 70 form the J domain. A CR-type zinc finger spans residues glycine 134–valine 212. Zn(2+) contacts are provided by cysteine 147, cysteine 150, cysteine 164, cysteine 167, cysteine 186, cysteine 189, cysteine 200, and cysteine 203. 4 CXXCXGXG motif repeats span residues cysteine 147–glycine 154, cysteine 164–glycine 171, cysteine 186–glycine 193, and cysteine 200–glycine 207.

Belongs to the DnaJ family. In terms of assembly, homodimer. Zn(2+) is required as a cofactor.

The protein localises to the cytoplasm. Functionally, participates actively in the response to hyperosmotic and heat shock by preventing the aggregation of stress-denatured proteins and by disaggregating proteins, also in an autonomous, DnaK-independent fashion. Unfolded proteins bind initially to DnaJ; upon interaction with the DnaJ-bound protein, DnaK hydrolyzes its bound ATP, resulting in the formation of a stable complex. GrpE releases ADP from DnaK; ATP binding to DnaK triggers the release of the substrate protein, thus completing the reaction cycle. Several rounds of ATP-dependent interactions between DnaJ, DnaK and GrpE are required for fully efficient folding. Also involved, together with DnaK and GrpE, in the DNA replication of plasmids through activation of initiation proteins. This is Chaperone protein DnaJ from Neisseria meningitidis serogroup C (strain 053442).